The primary structure comprises 179 residues: MARLRKHYDTVVKPALQKEFNYANPMQVPKLQKIVINMGVGEAAQDSKKIESALAELTLISGQKPVSTKAKMSIAQFKLREGQVVGCKVTLRAERMYEFLDRLINIALPRVRDFRGVPGKSFDGRGNYSLGLKEQIVFPEIDYDKVETIRGMDIIFVTTAKSNEEAKALLKGFDMPFVA.

It belongs to the universal ribosomal protein uL5 family. Part of the 50S ribosomal subunit; part of the 5S rRNA/L5/L18/L25 subcomplex. Contacts the 5S rRNA and the P site tRNA. Forms a bridge to the 30S subunit in the 70S ribosome.

Its function is as follows. This is one of the proteins that bind and probably mediate the attachment of the 5S RNA into the large ribosomal subunit, where it forms part of the central protuberance. In the 70S ribosome it contacts protein S13 of the 30S subunit (bridge B1b), connecting the 2 subunits; this bridge is implicated in subunit movement. Contacts the P site tRNA; the 5S rRNA and some of its associated proteins might help stabilize positioning of ribosome-bound tRNAs. The chain is Large ribosomal subunit protein uL5 from Paramagnetospirillum magneticum (strain ATCC 700264 / AMB-1) (Magnetospirillum magneticum).